Here is a 442-residue protein sequence, read N- to C-terminus: D-serine dehydratase (442 aa).

The residue at position 118 (K118) is an N6-(pyridoxal phosphate)lysine.

This sequence belongs to the serine/threonine dehydratase family. DsdA subfamily. Monomer. Pyridoxal 5'-phosphate serves as cofactor.

The catalysed reaction is D-serine = pyruvate + NH4(+). The sequence is that of D-serine dehydratase from Escherichia coli O139:H28 (strain E24377A / ETEC).